Reading from the N-terminus, the 519-residue chain is Sugar transport protein MST5 (519 aa).

The Cytoplasmic segment spans residues Met-1–Lys-18. The helical transmembrane segment at Met-19–Tyr-39 threads the bilayer. The Extracellular portion of the chain corresponds to Asp-40 to Gln-80. Residues Leu-81–Ala-101 form a helical membrane-spanning segment. Residues Trp-102–Lys-110 are Cytoplasmic-facing. Residues Trp-111 to Asn-127 traverse the membrane as a helical segment. Gly-128 is a topological domain (extracellular). A helical membrane pass occupies residues Ala-129–Phe-149. Over Ala-150–Arg-167 the chain is Cytoplasmic. Residues Gly-168–Ile-188 form a helical membrane-spanning segment. Topologically, residues Asn-189–Arg-202 are extracellular. The chain crosses the membrane as a helical span at residues Ile-203–Pro-223. The Cytoplasmic portion of the chain corresponds to Asp-224–Gln-295. A helical membrane pass occupies residues Leu-296–Ala-316. Residues Gly-317–Leu-321 lie on the Extracellular side of the membrane. Residues Met-322–Val-342 traverse the membrane as a helical segment. At Asp-343–Gln-357 the chain is on the cytoplasmic side. Residues Met-358–Val-378 traverse the membrane as a helical segment. Topologically, residues Gly-379–Ala-386 are extracellular. A helical membrane pass occupies residues Ile-387 to Leu-407. Topologically, residues Gly-408 to Ser-426 are cytoplasmic. The chain crosses the membrane as a helical span at residues Ile-427 to Leu-447. The Extracellular portion of the chain corresponds to Cys-448–Lys-451. Residues Phe-452–Phe-472 traverse the membrane as a helical segment. Residues Leu-473 to Val-519 lie on the Cytoplasmic side of the membrane.

The protein belongs to the major facilitator superfamily. Sugar transporter (TC 2.A.1.1) family. In terms of tissue distribution, expressed in panicles before heading. Expressed in flowers before pollination.

It is found in the membrane. Its function is as follows. Mediates active uptake of hexoses by sugar:proton symport. Can transport glucose, xylose and 3-O-methylglucose. May play a role at the early stage of seed development. The polypeptide is Sugar transport protein MST5 (Oryza sativa subsp. japonica (Rice)).